We begin with the raw amino-acid sequence, 389 residues long: MVTVEEVRKAQRAQGPATIMAIGTSTPQNCVDQSTYPDYYFRITNSEHLVELKEKFKRMCEKSMIKKRYMYLTEEILTENPNICAYMAPSLDARQDIVVVEVPKLGKEAAQKAIKEWGQPKSKITHLVFCTTSGVDMPGADYQLTKLLGLQPSVKRFMMYQQGCFAGGTVIRLAKDLAENNKGARVLVVCSEITAVTFRGPSDAHLDSLVGQALFGDGAAALIIGSDPDPDLERPLFQLVSAAQTILPDSGGAIDGHLREVGLTFHLLKDVPGLISKHIEKSLNEAFQPLGIRDWNSLFWIAHPGGPAILDQVEEKLELKPEKLRATRHVLSEYGNMSSACVLFILDEMRKASSKEGLNTTGEGLEWGVLFGFGPGLTVETVVLHSVSA.

Residue Cys-164 is part of the active site.

The protein belongs to the thiolase-like superfamily. Chalcone/stilbene synthases family.

The catalysed reaction is (E)-4-coumaroyl-CoA + 3 malonyl-CoA + 3 H(+) = 2',4,4',6'-tetrahydroxychalcone + 3 CO2 + 4 CoA. Its pathway is secondary metabolite biosynthesis; flavonoid biosynthesis. In terms of biological role, the primary product of this enzyme is 4,2',4',6'-tetrahydroxychalcone (also termed naringenin-chalcone or chalcone) which can under specific conditions spontaneously isomerize into naringenin. The sequence is that of Chalcone synthase E (CHSE) from Ipomoea purpurea (Common morning glory).